The primary structure comprises 690 residues: Tripartite terminase subunit 3 (690 aa).

Positions 226–233 (IPRRHGKT) match the Walker A motif motif. The Walker B motif signature appears at 321-326 (LLFVDE). Glu-326 functions as the For ATPase activity in the catalytic mechanism. Catalysis depends on for nuclease activity residues Asp-481, Glu-555, and Asp-667.

The protein belongs to the herpesviridae TRM3 protein family. In terms of assembly, interacts with the terminase subunits TRM1 and TRM2. Interacts with portal protein.

Its subcellular location is the host nucleus. In terms of biological role, component of the molecular motor that translocates viral genomic DNA in empty capsid during DNA packaging. Forms a tripartite terminase complex together with TRM1 and TRM2 in the host cytoplasm. Once the complex reaches the host nucleus, it interacts with the capsid portal vertex. This portal forms a ring in which genomic DNA is translocated into the capsid. TRM3 carries an RNase H-like nuclease activity that plays an important role for the cleavage of concatemeric viral DNA into unit length genomes. The sequence is that of Tripartite terminase subunit 3 from Homo sapiens (Human).